Reading from the N-terminus, the 530-residue chain is Structure-specific endonuclease subunit SLX1 homolog 2 (530 aa).

A GIY-YIG domain is found at 4 to 89 (RFHCVYLLTS…PTKSTRLKTQ (86 aa)). The SLX1-type zinc finger occupies 232 to 365 (CALCSLPLRS…PSQPCPCPLC (134 aa)). Disordered regions lie at residues 276–306 (ATMGQSTRNERSGEYSNKIKDDSNDGTMDAH), 410–438 (NSSLTERKSRRKAKPALGQKRNRGEYCGD), and 474–502 (LPPSGDEGYACDSSRRGVGGSKHTTRMTD). Positions 283–298 (RNERSGEYSNKIKDDS) are enriched in basic and acidic residues.

Belongs to the SLX1 family. As to quaternary structure, forms a heterodimer with a member of the SLX4 family. It depends on a divalent metal cation as a cofactor.

The protein resides in the nucleus. Its function is as follows. Catalytic subunit of a heterodimeric structure-specific endonuclease that resolves DNA secondary structures generated during DNA repair and recombination. Has endonuclease activity towards branched DNA substrates, introducing single-strand cuts in duplex DNA close to junctions with ss-DNA. This Trypanosoma cruzi (strain CL Brener) protein is Structure-specific endonuclease subunit SLX1 homolog 2.